We begin with the raw amino-acid sequence, 240 residues long: MADS-box transcription factor 27 (240 aa).

The MADS-box domain occupies 1–61; it reads MGRGKIVIRR…GRLYEYSSTS (61 aa). Positions 86–176 constitute a K-box domain; the sequence is LKFWQREAAS…YKKISLIRQE (91 aa). The span at 220–231 shows a compositional bias: polar residues; it reads LPQHSDAEQSTA. Residues 220 to 240 are disordered; that stretch reads LPQHSDAEQSTAPKLGLQLNP.

In terms of tissue distribution, ubiquitous.

It is found in the nucleus. Functionally, probable transcription factor. This Oryza sativa subsp. japonica (Rice) protein is MADS-box transcription factor 27 (MADS27).